The following is a 490-amino-acid chain: UDP-glycosyltransferase 73C7 (490 aa).

UDP-alpha-D-glucose is bound by residues serine 291, 351–353, 368–376, and 390–393; these read APQ, HCGWNSTLE, and FAEQ.

Belongs to the UDP-glycosyltransferase family.

This chain is UDP-glycosyltransferase 73C7 (UGT73C7), found in Arabidopsis thaliana (Mouse-ear cress).